A 346-amino-acid chain; its full sequence is NADH-ubiquinone oxidoreductase chain 2 (346 aa).

Transmembrane regions (helical) follow at residues 3 to 23, 25 to 45, 67 to 87, 96 to 116, 122 to 142, 145 to 165, 200 to 220, 238 to 258, 273 to 293, and 324 to 344; these read PIIF…VMIS, HWLL…PIMM, SMLL…WTVM, MLMT…FWVP, IPLS…MSVL, IFPS…ILIG, TLLN…MFMA, IMTI…PLSG, NSII…YFYM, and FLPT…MLSV.

It belongs to the complex I subunit 2 family. Core subunit of respiratory chain NADH dehydrogenase (Complex I) which is composed of 45 different subunits. Interacts with TMEM242.

Its subcellular location is the mitochondrion inner membrane. It catalyses the reaction a ubiquinone + NADH + 5 H(+)(in) = a ubiquinol + NAD(+) + 4 H(+)(out). Core subunit of the mitochondrial membrane respiratory chain NADH dehydrogenase (Complex I) which catalyzes electron transfer from NADH through the respiratory chain, using ubiquinone as an electron acceptor. Essential for the catalytic activity and assembly of complex I. This is NADH-ubiquinone oxidoreductase chain 2 from Bos mutus grunniens (Wild yak).